The sequence spans 198 residues: Holliday junction branch migration complex subunit RuvA (198 aa).

The segment at 1–64 (MIAHLRGTLL…EDAIALFGFL (64 aa)) is domain I. Residues 65–141 (DREEKRLFER…LDDLIAAAPA (77 aa)) are domain II. The interval 141–145 (AAGPV) is flexible linker. The tract at residues 146–198 (AAGPAAEDVLSALLNLGYQRPAALKAIETAVEKDAAAGEDFDLLFRAALKLIR) is domain III.

Belongs to the RuvA family. In terms of assembly, homotetramer. Forms an RuvA(8)-RuvB(12)-Holliday junction (HJ) complex. HJ DNA is sandwiched between 2 RuvA tetramers; dsDNA enters through RuvA and exits via RuvB. An RuvB hexamer assembles on each DNA strand where it exits the tetramer. Each RuvB hexamer is contacted by two RuvA subunits (via domain III) on 2 adjacent RuvB subunits; this complex drives branch migration. In the full resolvosome a probable DNA-RuvA(4)-RuvB(12)-RuvC(2) complex forms which resolves the HJ.

The protein resides in the cytoplasm. Its function is as follows. The RuvA-RuvB-RuvC complex processes Holliday junction (HJ) DNA during genetic recombination and DNA repair, while the RuvA-RuvB complex plays an important role in the rescue of blocked DNA replication forks via replication fork reversal (RFR). RuvA specifically binds to HJ cruciform DNA, conferring on it an open structure. The RuvB hexamer acts as an ATP-dependent pump, pulling dsDNA into and through the RuvAB complex. HJ branch migration allows RuvC to scan DNA until it finds its consensus sequence, where it cleaves and resolves the cruciform DNA. This is Holliday junction branch migration complex subunit RuvA from Acidobacterium capsulatum (strain ATCC 51196 / DSM 11244 / BCRC 80197 / JCM 7670 / NBRC 15755 / NCIMB 13165 / 161).